A 538-amino-acid polypeptide reads, in one-letter code: Nucleobase-ascorbate transporter 7 (538 aa).

Over residues 1-11 (MAGGGGGGGGV) the composition is skewed to gly residues. The segment at 1–20 (MAGGGGGGGGVAPPLKHDGL) is disordered. The next 12 helical transmembrane spans lie at 45 to 65 (AILL…LIPT), 81 to 101 (MVQT…FFGT), 103 to 123 (LPAV…IILA), 143 to 163 (IQGA…SGLW), 166 to 186 (VVRL…GFGL), 191 to 211 (FPLL…LLLF), 229 to 249 (FAVI…TVGG), 295 to 315 (FAMM…YIVV), 372 to 394 (VVQI…AIFA), 398 to 420 (APVV…LSLL), 432 to 452 (FILG…NQYT), and 471 to 491 (INVP…FLDV).

Belongs to the nucleobase:cation symporter-2 (NCS2) (TC 2.A.40) family. Expressed exclusively in ovules.

It localises to the cell membrane. The polypeptide is Nucleobase-ascorbate transporter 7 (NAT7) (Arabidopsis thaliana (Mouse-ear cress)).